Consider the following 217-residue polypeptide: Peptide methionine sulfoxide reductase MsrA (217 aa).

Residue Cys56 is part of the active site.

This sequence belongs to the MsrA Met sulfoxide reductase family.

It catalyses the reaction L-methionyl-[protein] + [thioredoxin]-disulfide + H2O = L-methionyl-(S)-S-oxide-[protein] + [thioredoxin]-dithiol. The catalysed reaction is [thioredoxin]-disulfide + L-methionine + H2O = L-methionine (S)-S-oxide + [thioredoxin]-dithiol. Has an important function as a repair enzyme for proteins that have been inactivated by oxidation. Catalyzes the reversible oxidation-reduction of methionine sulfoxide in proteins to methionine. This is Peptide methionine sulfoxide reductase MsrA from Corynebacterium glutamicum (strain ATCC 13032 / DSM 20300 / JCM 1318 / BCRC 11384 / CCUG 27702 / LMG 3730 / NBRC 12168 / NCIMB 10025 / NRRL B-2784 / 534).